The sequence spans 326 residues: JNK1/MAPK8-associated membrane protein homolog (326 aa).

The Lumenal segment spans residues methionine 1–proline 71. An N-linked (GlcNAc...) asparagine glycan is attached at asparagine 27. Residues tyrosine 72–isoleucine 92 form a helical membrane-spanning segment. Over arginine 93–glutamate 108 the chain is Cytoplasmic. A helical transmembrane segment spans residues tyrosine 109–proline 129. Topologically, residues arginine 130–glutamate 166 are lumenal. Residues valine 167–leucine 187 form a helical membrane-spanning segment. Over valine 188–tyrosine 208 the chain is Cytoplasmic. 2 consecutive transmembrane segments (helical) span residues alanine 209–phenylalanine 229 and tyrosine 230–leucine 250. Residues glutamate 251 to histidine 269 are Cytoplasmic-facing. Residues leucine 270–proline 290 traverse the membrane as a helical segment. The Lumenal portion of the chain corresponds to leucine 291–arginine 296. A helical membrane pass occupies residues tryptophan 297–serine 317. The Cytoplasmic portion of the chain corresponds to asparagine 318–serine 326.

The protein resides in the endoplasmic reticulum membrane. Its function is as follows. Facilitates degradation of misfolded endoplasmic reticulum (ER) proteins through the recruitment of components of the proteasome and endoplasmic reticulum-associated degradation (ERAD) system. Involved in ER stress response. The polypeptide is JNK1/MAPK8-associated membrane protein homolog (Caenorhabditis elegans).